The following is a 101-amino-acid chain: Large ribosomal subunit protein bL21 (101 aa).

This sequence belongs to the bacterial ribosomal protein bL21 family. In terms of assembly, part of the 50S ribosomal subunit. Contacts protein L20.

Its function is as follows. This protein binds to 23S rRNA in the presence of protein L20. This chain is Large ribosomal subunit protein bL21, found in Metamycoplasma arthritidis (strain 158L3-1) (Mycoplasma arthritidis).